Consider the following 123-residue polypeptide: Hydrogenase maturation factor HypA (123 aa).

Position 2 (H2) interacts with Ni(2+). The Zn(2+) site is built by C73, C76, C90, and C93.

Belongs to the HypA/HybF family.

In terms of biological role, involved in the maturation of [NiFe] hydrogenases. Required for nickel insertion into the metal center of the hydrogenase. In Roseiflexus sp. (strain RS-1), this protein is Hydrogenase maturation factor HypA.